The following is a 361-amino-acid chain: MKNLFLFCRAGFEKECAAEIQQRAGELNVGGFVKANNNDAYVVYQCFEDDAADTLVKQLPLDSLIFARQMFAASDLLVDLPENDRISPIVAALSDVSKAGEVRVETPDTNEAKELSAFCRKFTVPLRQHLKKSGSLLAQENPKRPIIHVCFIGPGRAYVGYSYSNNSSPHFMGIPRLKMAADAPSRSSLKLDEAFGQFVPKEEQEERIRSGMNSVDLGACPGGWTYQLVRRGMFVSAVDNGPMDEKLMETGQVKHYREDGFRFEPQRKNIYWLVCDMVEKPARVAELIEAWAINGWFKEAIFNLKLPMKSRYKEVTAILETMQTILKENGVTDFKVQCKHLYHDRDEVTVHLWLRPNTAWN.

S-adenosyl-L-methionine contacts are provided by residues Ser187, 220-223 (CPGG), Asp239, Asp259, and Asp276. Catalysis depends on Lys305, which acts as the Proton acceptor.

It belongs to the class I-like SAM-binding methyltransferase superfamily. RNA methyltransferase RlmE family. RlmM subfamily. In terms of assembly, monomer.

The protein resides in the cytoplasm. The catalysed reaction is cytidine(2498) in 23S rRNA + S-adenosyl-L-methionine = 2'-O-methylcytidine(2498) in 23S rRNA + S-adenosyl-L-homocysteine + H(+). Catalyzes the 2'-O-methylation at nucleotide C2498 in 23S rRNA. The polypeptide is Ribosomal RNA large subunit methyltransferase M (Shewanella baltica (strain OS223)).